The primary structure comprises 2245 residues: Basic helix-loop-helix domain-containing protein USF3 (2245 aa).

Positions 1–28 are disordered; that stretch reads MPEMTENETPTKKQHRKKNRETHNAVER. The region spanning 18-69 is the bHLH domain; it reads KNRETHNAVERHRKKKINAGINRIGELIPCSPALKQSKNMILDQAFKYITEL. A coiled-coil region spans residues 77-112; it reads LLNGGNNEQAEEIKKLRKQLEEIQKENGRYIELLKA. 13 disordered regions span residues 271–290, 447–470, 881–900, 906–933, 1015–1041, 1164–1238, 1307–1331, 1460–1624, 1636–1664, 1736–1764, 1777–1815, 1834–1859, and 1891–2031; these read LHTC…QENP, SQTP…TSNH, SKSK…VTSE, AAKS…ALSD, KNPQ…IVDS, PSEA…SITS, IPNS…AKRA, IKQQ…VSGH, LEQQ…ERNR, TFKP…GNPV, ISQN…ENTC, GSQR…YNCP, and STLN…QPAT. A compositionally biased stretch (polar residues) spans 273-288; that stretch reads TCLNDQNSSENKNGQE. Low complexity predominate over residues 881–896; that stretch reads SKSKSAEKSSPPSQES. The span at 912–925 shows a compositional bias: polar residues; it reads STPNLQQETSQDKP. 2 stretches are compositionally biased toward polar residues: residues 1185–1202 and 1219–1238; these read GTGQ…QGSI and IKTS…SITS. Over residues 1319-1331 the composition is skewed to basic and acidic residues; that stretch reads PSHESRKDSAKRA. A compositionally biased stretch (low complexity) spans 1462 to 1478; sequence QQQQQQQQQQQQQQQQQ. Composition is skewed to polar residues over residues 1501-1520 and 1528-1538; these read SVHS…QEVQ and VQGTQTSQLSL. The segment covering 1560-1569 has biased composition (low complexity); it reads QQMQQQMQQH. Residues 1570 to 1585 are compositionally biased toward polar residues; it reads FGSSQTEKSCENPSTS. Low complexity predominate over residues 1593–1624; the sequence is QNHLNQDIMHQQQDVGSRQQGSGVSSEHVSGH. The segment covering 1636–1654 has biased composition (polar residues); that stretch reads LEQQMVSQPSIVTRSSDMT. Polar residues-rich tracts occupy residues 1904–1923 and 1998–2007; these read GDIQ…SNPM and SGNQRQSTVF.

It is found in the nucleus. In terms of biological role, involved in the negative regulation of epithelial-mesenchymal transition, the process by which epithelial cells lose their polarity and adhesion properties to become mesenchymal cells with enhanced migration and invasive properties. This Homo sapiens (Human) protein is Basic helix-loop-helix domain-containing protein USF3.